Here is a 517-residue protein sequence, read N- to C-terminus: Sugar transport protein MST1 (517 aa).

The Cytoplasmic portion of the chain corresponds to 1–25 (MAGGVIVANDGDGSAVDHGGRLTFS). A helical membrane pass occupies residues 26 to 46 (VVITCLVAASGGLIFGYDVGI). The Extracellular portion of the chain corresponds to 47 to 83 (SGGVSTMEPFLRRFFPGVVRRMAEARPGNEYCVYDSQ). The helical transmembrane segment at 84-104 (ALTAFTSSLYVAGLVASLVAS) threads the bilayer. The Cytoplasmic segment spans residues 105–120 (RVTRAMGRQAVMVMGG). Residues 121–141 (ALFFAGGAVTGFAVNIAMLIV) form a helical membrane-spanning segment. Topologically, residues 142-143 (GR) are extracellular. A helical membrane pass occupies residues 144–164 (MLLGFGVGFTNQAAPLFLAEM). The Cytoplasmic portion of the chain corresponds to 165-170 (APTRWR). A helical transmembrane segment spans residues 171-191 (GSLTAGFQFFLAVGVVIATVT). At 192–203 (NYFASRVPWGWR) the chain is on the extracellular side. A helical transmembrane segment spans residues 204-224 (LSLGLAGAPAVVIFLGALFLT). The Cytoplasmic segment spans residues 225–288 (DTPSSLVMRG…AARREYRPYL (64 aa)). Residues 289–309 (VFAVAMPMFFQLTGVIVISFF) traverse the membrane as a helical segment. The Extracellular portion of the chain corresponds to 310–325 (SPLVFRTVGFGSNAAL). Residues 326-346 (MGNVILGAVNLVCLMLSTLVI) traverse the membrane as a helical segment. Residues 347–352 (DRYGRK) are Cytoplasmic-facing. The helical transmembrane segment at 353–373 (VLFMVGGAIMIIAQVGVAWIM) threads the bilayer. At 374 to 389 (GAQVGKNGSEAMARPY) the chain is on the extracellular side. Residues 390–410 (AVAVVAFTCLHTAGFGWSWGP) form a helical membrane-spanning segment. The Cytoplasmic segment spans residues 411 to 430 (LGWVIPGEIFPVDIRSAGQA). A helical transmembrane segment spans residues 431–451 (MNVSIGLGLTFVQTQSFLAML). Residues 452-456 (CRFRY) lie on the Extracellular side of the membrane. The helical transmembrane segment at 457–477 (GTFAYYAAWVAVMTVFIAVFL) threads the bilayer. Over 478 to 517 (PETKGVPLESMATVWARHWYWKRFAREQPKTSADEPTGTY) the chain is Cytoplasmic.

It belongs to the major facilitator superfamily. Sugar transporter (TC 2.A.1.1) family.

It is found in the membrane. Mediates active uptake of hexoses by sugar:proton symport. The protein is Sugar transport protein MST1 of Oryza sativa subsp. japonica (Rice).